A 466-amino-acid chain; its full sequence is MALLTAAARLLGAKNSSCLVLAARHASASSTNLKDILSNLIPKEQARVKTFRQQHGKTVVGQITVDMMYGGMRGMKGLVYETSVLDPDEGIRFRGYSIPECQKLLPKAKGGEEPLPEGLFWLLVTGQMPTEEQVSWLSQEWAKRAALPSHVVTMLDNFPTNLHPMSQLSAAITALNSESNFARAYAEGINRTKYWELIYEDCMDLIAKLPCVAAKIYRNLYREGSSIGAIDSKLDWSHNFTNMLCYTEPQFTELMRLYLTIHSDHDGGNVSAHTSHLVGSALSDTYLSFAAAMNGLAGPLHGLANQEVLVWLTQLQKEVGKDVSDEKLRDYIWNTLNSGRVVPGYGHAVLRKTDPRYSCQREFALKHLPKDPMFKLVAQLYKIVPNILLEQGKAKNPWPNVDAHSGVLLQYYGMTEMNYYTVLFGVSRALGVLAQLIWSRALGFPLERPKSMSTDGLMKFVDSKSG.

The transit peptide at 1–27 (MALLTAAARLLGAKNSSCLVLAARHAS) directs the protein to the mitochondrion. The SIFI-degron signature appears at 2–21 (ALLTAAARLLGAKNSSCLVL). Position 57 is an N6-succinyllysine (Lys-57). Position 76 is an N6-acetyllysine; alternate (Lys-76). An N6-succinyllysine; alternate modification is found at Lys-76. Residues Lys-103 and Lys-193 each carry the N6-succinyllysine modification. Ser-226 is modified (phosphoserine). The active site involves His-301. 2 positions are modified to N6-acetyllysine; alternate: Lys-321 and Lys-327. N6-succinyllysine; alternate is present on residues Lys-321 and Lys-327. His-347 is a catalytic residue. Residue Arg-356 participates in oxaloacetate binding. The residue at position 375 (Lys-375) is an N6-acetyllysine; alternate. Lys-375 bears the N6-succinyllysine; alternate mark. At Lys-382 the chain carries N6-acetyllysine. Lys-393 is modified (N6-acetyllysine; alternate). Lys-393 bears the N6-succinyllysine; alternate mark. Residue Lys-395 is modified to N6,N6,N6-trimethyllysine. Residue Asp-402 is part of the active site. Arg-428 and Arg-448 together coordinate oxaloacetate. Lys-450 carries the N6-succinyllysine modification. Lys-459 is modified (N6-acetyllysine; alternate). Lys-459 carries the N6-succinyllysine; alternate modification.

Belongs to the citrate synthase family. As to quaternary structure, homodimer. Methylated. Trimethylation at Lys-395 by CSKMT decreases citrate synthase activity. In terms of processing, in response to mitochondrial stress, the precursor protein is ubiquitinated by the SIFI complex in the cytoplasm before mitochondrial import, leading to its degradation. Within the SIFI complex, UBR4 initiates ubiquitin chain that are further elongated or branched by KCMF1. As to expression, expressed in the head region and flagellum of epididymal sperm.

Its subcellular location is the mitochondrion matrix. The enzyme catalyses oxaloacetate + acetyl-CoA + H2O = citrate + CoA + H(+). Its pathway is carbohydrate metabolism; tricarboxylic acid cycle; isocitrate from oxaloacetate: step 1/2. Key enzyme of the Krebs tricarboxylic acid cycle which catalyzes the synthesis of citrate from acetyl coenzyme A and oxaloacetate. This Rattus norvegicus (Rat) protein is Citrate synthase, mitochondrial (Cs).